A 283-amino-acid polypeptide reads, in one-letter code: Large ribosomal subunit protein uL2c (283 aa).

The disordered stretch occupies residues 229-274 (GVVMNPIDHPHGGGEGKVPIGRKKPLTPWGHPALGRKSRKRRKYSD). The span at 262-271 (LGRKSRKRRK) shows a compositional bias: basic residues.

Belongs to the universal ribosomal protein uL2 family. In terms of assembly, part of the 50S ribosomal subunit.

The protein localises to the plastid. This Aneura mirabilis (Parasitic liverwort) protein is Large ribosomal subunit protein uL2c (rpl2).